Here is a 469-residue protein sequence, read N- to C-terminus: Arginine biosynthesis bifunctional protein ArgJ, chloroplastic (469 aa).

Substrate contacts are provided by T213, K239, T250, E337, N464, and T469. The active-site Nucleophile is T250.

This sequence belongs to the ArgJ family. In terms of assembly, heterodimer of an alpha and a beta chain.

The protein localises to the plastid. It is found in the chloroplast. It carries out the reaction N(2)-acetyl-L-ornithine + L-glutamate = N-acetyl-L-glutamate + L-ornithine. The enzyme catalyses L-glutamate + acetyl-CoA = N-acetyl-L-glutamate + CoA + H(+). It participates in amino-acid biosynthesis; L-arginine biosynthesis; L-ornithine and N-acetyl-L-glutamate from L-glutamate and N(2)-acetyl-L-ornithine (cyclic): step 1/1. Its pathway is amino-acid biosynthesis; L-arginine biosynthesis; N(2)-acetyl-L-ornithine from L-glutamate: step 1/4. In terms of biological role, catalyzes two activities which are involved in the cyclic version of arginine biosynthesis: the synthesis of acetylglutamate from glutamate and acetyl-CoA, and of ornithine by transacetylation between acetylornithine and glutamate. The sequence is that of Arginine biosynthesis bifunctional protein ArgJ, chloroplastic from Ricinus communis (Castor bean).